A 201-amino-acid polypeptide reads, in one-letter code: Recombination protein RecR (201 aa).

The segment at 60–75 (CKVCGNIDTQNPCTVC) adopts a C4-type zinc-finger fold. The Toprim domain occupies 83 to 178 (SIIVVVADVA…KVTRLAHGVP (96 aa)).

Belongs to the RecR family.

In terms of biological role, may play a role in DNA repair. It seems to be involved in an RecBC-independent recombinational process of DNA repair. It may act with RecF and RecO. The protein is Recombination protein RecR of Rhodopseudomonas palustris (strain BisB18).